Consider the following 160-residue polypeptide: Methyl-coenzyme M reductase operon protein D (160 aa).

MCR is composed of three subunits: alpha, beta, and gamma. The function of proteins C and D is not known.

In Methanococcus vannielii, this protein is Methyl-coenzyme M reductase operon protein D (mcrD).